We begin with the raw amino-acid sequence, 311 residues long: Aspartate carbamoyltransferase catalytic subunit (311 aa).

2 residues coordinate carbamoyl phosphate: R59 and T60. K87 contacts L-aspartate. Carbamoyl phosphate-binding residues include R109, H139, and Q142. L-aspartate is bound by residues R172 and R224. Carbamoyl phosphate contacts are provided by A265 and P266.

It belongs to the aspartate/ornithine carbamoyltransferase superfamily. ATCase family. In terms of assembly, heterododecamer (2C3:3R2) of six catalytic PyrB chains organized as two trimers (C3), and six regulatory PyrI chains organized as three dimers (R2).

It carries out the reaction carbamoyl phosphate + L-aspartate = N-carbamoyl-L-aspartate + phosphate + H(+). It participates in pyrimidine metabolism; UMP biosynthesis via de novo pathway; (S)-dihydroorotate from bicarbonate: step 2/3. Catalyzes the condensation of carbamoyl phosphate and aspartate to form carbamoyl aspartate and inorganic phosphate, the committed step in the de novo pyrimidine nucleotide biosynthesis pathway. The chain is Aspartate carbamoyltransferase catalytic subunit from Streptococcus pyogenes serotype M4 (strain MGAS10750).